The following is a 266-amino-acid chain: Phosphoethanolamine N-methyltransferase (266 aa).

Q18 serves as a coordination point for phosphoethanolamine. Residue Y19 is part of the active site. Residue Y27 participates in phosphoethanolamine binding. 8 residues coordinate S-adenosyl-L-methionine: I36, S37, G63, D85, I86, D110, I111, and R127. Residue H132 is part of the active site. Phosphoethanolamine is bound by residues Y160, Y175, R179, Y181, and K247.

The protein belongs to the class I-like SAM-binding methyltransferase superfamily. PEAMT family. In terms of assembly, monomer.

Its subcellular location is the golgi apparatus membrane. The protein resides in the cytoplasm. The enzyme catalyses phosphoethanolamine + S-adenosyl-L-methionine = N-methylethanolamine phosphate + S-adenosyl-L-homocysteine + H(+). The catalysed reaction is N-methylethanolamine phosphate + S-adenosyl-L-methionine = N,N-dimethylethanolamine phosphate + S-adenosyl-L-homocysteine + H(+). It carries out the reaction N,N-dimethylethanolamine phosphate + S-adenosyl-L-methionine = phosphocholine + S-adenosyl-L-homocysteine + H(+). Its pathway is phospholipid metabolism; phosphatidylcholine biosynthesis; phosphocholine from phosphoethanolamine. Its activity is regulated as follows. Inhibited by phosphocholine. Inhibited by hexadecylphosphocholine (miltefosine). Inhibited by S-adenosyl-l-homocysteine. Weakly inhibited in vitro by amodiaquine, chloroquine and primaquine. Inhibited by NSC-158011. In terms of biological role, catalyzes N-methylation of phosphoethanolamine, phosphomonomethylethanolamine and phosphodimethylethanolamine, the three methylation steps required to convert phosphoethanolamine to phosphocholine. Has no ethanolamine- or phosphatidylethanolamine-N-methyltransferase activity. Required for gametocyte development, maturation and transmission to mosquitoes and for oocyst formation in the mosquito midgut. This chain is Phosphoethanolamine N-methyltransferase, found in Plasmodium falciparum (isolate 3D7).